Reading from the N-terminus, the 360-residue chain is Protein DVR-1 (360 aa).

An N-terminal signal peptide occupies residues 1–16 (MVWLRLWAFLHILAIV). Residues 17 to 246 (TLDPELKRRE…LRCKRPRRKR (230 aa)) constitute a propeptide that is removed on maturation. Asn-113, Asn-181, and Asn-301 each carry an N-linked (GlcNAc...) asparagine glycan. 3 cysteine pairs are disulfide-bonded: Cys-259–Cys-325, Cys-288–Cys-357, and Cys-292–Cys-359.

This sequence belongs to the TGF-beta family. In terms of assembly, homodimer. In terms of tissue distribution, vegetal region of the egg.

Its subcellular location is the secreted. In terms of biological role, serves to facilitate the differentiation of either mesoderm or endoderm either as a cofactor in an instructive signal or by providing permissive environment. This Xenopus laevis (African clawed frog) protein is Protein DVR-1 (dvr1).